Consider the following 334-residue polypeptide: Non-functional pseudokinase ZED1 (334 aa).

One can recognise a Protein kinase domain in the interval 49 to 334 (FSESRIISSW…KELKLIEKLS (286 aa)). Residues 55–63 (ISSWGYFIW) and K76 contribute to the ATP site. Residues T125 and T177 each carry the O-acetylthreonine modification.

Belongs to the protein kinase superfamily. Ser/Thr protein kinase family. ZRK subfamily. As to quaternary structure, interacts with RPP13L4/ZAR1. Component of an immune signaling complex made of, at least, SZE1, BKN2/SZE2, ZAR1 and ZED1. Binds directly to SZE1 at the plasma membrane. In terms of tissue distribution, expressed in seedlings, young leaves, floral organs, shoot apical meristems (SAM) and inflorescence stems.

It is found in the cytoplasm. The protein resides in the cytosol. It localises to the nucleus. The protein localises to the cell membrane. In terms of biological role, together with RPP13L4/ZAR1, involved in the ambient temperature (above 22 degrees Celsius)-sensitive aerial organ development. Together with RPP13L4/ZAR1, involved in the regulation of the ambient temperature-sensitive intersection of growth and immune response in the absence of pathogens, by repressing the transcription of SNC1. Probable non-functional kinase required for recognition of the Pseudomonas syringae type III effector HopZ1a by RPP13L4/ZAR1 and, together with SZE1 and SZE2, to trigger subsequent defense responses. May function as a decoy to trap HopZ1a in the ZAR1 complex for recognition by the plant immune system. The polypeptide is Non-functional pseudokinase ZED1 (Arabidopsis thaliana (Mouse-ear cress)).